The chain runs to 159 residues: Transcriptional repressor NrdR (159 aa).

A zinc finger spans residues 3–34; it reads CPFCRHDDTQVVDSRVSEDGAAIRRRRRCSAC. In terms of domain architecture, ATP-cone spans 49 to 139; it reads PFVVKKDGSR…VYRRFEDVSE (91 aa).

It belongs to the NrdR family. Requires Zn(2+) as cofactor.

Negatively regulates transcription of bacterial ribonucleotide reductase nrd genes and operons by binding to NrdR-boxes. This is Transcriptional repressor NrdR from Burkholderia cenocepacia (strain ATCC BAA-245 / DSM 16553 / LMG 16656 / NCTC 13227 / J2315 / CF5610) (Burkholderia cepacia (strain J2315)).